The following is a 284-amino-acid chain: tRNA N(3)-cytidine methyltransferase METTL6 (284 aa).

2 residues coordinate S-adenosyl-L-methionine: tryptophan 45 and tyrosine 49. 8 residues coordinate S-adenosyl-L-homocysteine: tyrosine 49, histidine 61, glutamate 85, glycine 87, aspartate 110, aspartate 136, leucine 137, and isoleucine 157. 5 residues coordinate S-adenosyl-L-methionine: glycine 87, aspartate 110, aspartate 136, leucine 137, and isoleucine 157.

This sequence belongs to the methyltransferase superfamily. METL family. Monomer. Interacts with SARS1/SerRS; interaction is mediated via tRNA(Ser) and is required for N(3)-methylcytidine methylation.

It localises to the cytoplasm. It is found in the nucleus. It carries out the reaction cytidine(32) in tRNA(Ser) + S-adenosyl-L-methionine = N(3)-methylcytidine(32) in tRNA(Ser) + S-adenosyl-L-homocysteine + H(+). Its function is as follows. S-adenosyl-L-methionine-dependent methyltransferase that mediates N(3)-methylcytidine modification of residue 32 of the tRNA anticodon loop of tRNA(Ser), including tRNA(Ser)(UGA) and tRNA(Ser)(GCU). Interaction with SARS1/SerRS is required for N(3)-methylcytidine methylation. The chain is tRNA N(3)-cytidine methyltransferase METTL6 from Homo sapiens (Human).